Here is a 330-residue protein sequence, read N- to C-terminus: tRNA pseudouridine synthase B (330 aa).

Aspartate 42 (nucleophile) is an active-site residue.

The protein belongs to the pseudouridine synthase TruB family. Type 1 subfamily.

It carries out the reaction uridine(55) in tRNA = pseudouridine(55) in tRNA. Responsible for synthesis of pseudouridine from uracil-55 in the psi GC loop of transfer RNAs. This is tRNA pseudouridine synthase B from Lactococcus lactis subsp. cremoris (strain MG1363).